Here is a 176-residue protein sequence, read N- to C-terminus: Ribosome maturation factor RimM (176 aa).

In terms of domain architecture, PRC barrel spans 97-176 (EDEFYWRDLI…QILVDWDPDF (80 aa)).

This sequence belongs to the RimM family. As to quaternary structure, binds ribosomal protein uS19.

Its subcellular location is the cytoplasm. In terms of biological role, an accessory protein needed during the final step in the assembly of 30S ribosomal subunit, possibly for assembly of the head region. Essential for efficient processing of 16S rRNA. May be needed both before and after RbfA during the maturation of 16S rRNA. It has affinity for free ribosomal 30S subunits but not for 70S ribosomes. In Shewanella oneidensis (strain ATCC 700550 / JCM 31522 / CIP 106686 / LMG 19005 / NCIMB 14063 / MR-1), this protein is Ribosome maturation factor RimM.